The primary structure comprises 255 residues: Reticulon-like protein B3 (255 aa).

Positions 1–25 are enriched in basic and acidic residues; it reads MAEEHKHEESIMEKISEKIHGHDDS. The segment at 1 to 38 is disordered; sequence MAEEHKHEESIMEKISEKIHGHDDSSSSSSDSDDDKNS. Position 2 is an N-acetylalanine (alanine 2). Residues 64–255 enclose the Reticulon domain; the sequence is PADIFLWRNK…GAFAFIKKKD (192 aa). 3 helical membrane-spanning segments follow: residues 75–95, 97–117, and 186–206; these read VSGGVLGAATVSWILFELLEY, LLTLFGHISILALAVLFLWSS, and CNFLTLIYIATVLLFTIPVLY.

The protein resides in the endoplasmic reticulum membrane. The protein localises to the vacuole membrane. The chain is Reticulon-like protein B3 (RTNLB3) from Arabidopsis thaliana (Mouse-ear cress).